We begin with the raw amino-acid sequence, 1400 residues long: S phase cyclin A-associated protein in the endoplasmic reticulum (1400 aa).

Disordered stretches follow at residues 36–61 (ESKD…GTHK), 226–277 (VKAH…IRSR), 517–550 (PARP…HEEK), and 701–723 (RIEQ…RARD). The segment covering 231 to 243 (TGSTASSEITPAQ) has biased composition (polar residues). A compositionally biased stretch (basic and acidic residues) spans 539–550 (TIAESKKKHEEK). The segment at 792–816 (KQCSLCNVLISSEVYLFSHVKGRKH) adopts a C2H2-type zinc-finger fold. Residue S832 is modified to Phosphoserine.

As to quaternary structure, interacts with CCNA2/CDK2 complex, but not with CCNA2/CDC2, CCNB1/CDC2 or CCNE1/CDK2 complexes, at multiple phases of the cell cycle, including S and G2/M. Phosphorylated in vitro by the CCNA2/CDK2 complex. As to expression, widely expressed with high expression in testis. Isoform 1 is detected in various tissues, including retina, fetal and adult brain. Isoform 2 is expressed in the retina at high levels, and in the brain at very low levels.

It localises to the endoplasmic reticulum. It is found in the nucleus. Its function is as follows. CCNA2/CDK2 regulatory protein that transiently maintains CCNA2 in the cytoplasm. The polypeptide is S phase cyclin A-associated protein in the endoplasmic reticulum (Homo sapiens (Human)).